The chain runs to 386 residues: DNA-directed RNA polymerase subunit Rpo1C (386 aa).

Belongs to the RNA polymerase beta' chain family. Part of the RNA polymerase complex.

It localises to the cytoplasm. It carries out the reaction RNA(n) + a ribonucleoside 5'-triphosphate = RNA(n+1) + diphosphate. Functionally, DNA-dependent RNA polymerase (RNAP) catalyzes the transcription of DNA into RNA using the four ribonucleoside triphosphates as substrates. Forms part of the jaw domain. The protein is DNA-directed RNA polymerase subunit Rpo1C of Methanococcus maripaludis (strain DSM 14266 / JCM 13030 / NBRC 101832 / S2 / LL).